The sequence spans 566 residues: APC/C activator protein CDH1 (566 aa).

Positions 1 to 18 are enriched in polar residues; sequence MSTNLNPFMNNTPSSSPL. Positions 1–56 are disordered; the sequence is MSTNLNPFMNNTPSSSPLKGSESKRVSKRPISSSSSASLLSSPSRRSRPSTVYGDR. Positions 29 to 44 are enriched in low complexity; sequence RPISSSSSASLLSSPS. The C-box signature appears at 55–61; sequence DRYIPSR. S213 is subject to Phosphoserine. WD repeat units lie at residues 258–298, 300–339, 342–379, 383–422, 425–467, 469–510, and 513–552; these read PSLA…VVHL, DTEN…CIRT, GHID…PFFE, SHTQ…PILT, EHKA…KMSD, DSGS…PIAI, and GHSF…KAKV.

The protein belongs to the WD repeat CDC20/Fizzy family. As to quaternary structure, associates with the APC/C complex. Interacts with CLB2, CLB3, CDC5, HSL1, MSN5 and PSE1. Phosphorylated at multiple sites by CDC28, probably in its CLB5 bound form, in S, G2 and M phase of the cell cycle, thereby blocking the association of CDH1 to the APC/C and promoting nuclear export of CDH1 by MSN5. Dephosphorylated and activated by CDC14 in late anaphase, which may be necessary for PSE1-dependent nuclear localization.

The protein localises to the cytoplasm. The protein resides in the nucleus. In terms of biological role, activator protein that regulates the ubiquitin ligase activity and substrate specificity of the anaphase promoting complex/cyclosome (APC/C). During telophase and in the subsequent G1 phase of the cell cycle, recognizes and binds proteins containing a destruction box (D-box) and an additional degradation signal termed the KEN box including ASE1, CDC20, the B-type cyclins CLB2 and CLB3, the polo-like kinase CDC5 and HSL1, and recruits them in a C-box-dependent manner to the APC/C for ubiquitination and subsequent proteolysis. Required for exit from mitosis, cytokinesis and formation of prereplicative complexes in G1. Probably is the target of a BUB2-dependent spindle checkpoint pathway. The protein is APC/C activator protein CDH1 (CDH1) of Saccharomyces cerevisiae (strain ATCC 204508 / S288c) (Baker's yeast).